Consider the following 365-residue polypeptide: DNA replication and repair protein RecF (365 aa).

Residue 30 to 37 (GLNAQGKT) participates in ATP binding.

This sequence belongs to the RecF family.

The protein resides in the cytoplasm. In terms of biological role, the RecF protein is involved in DNA metabolism; it is required for DNA replication and normal SOS inducibility. RecF binds preferentially to single-stranded, linear DNA. It also seems to bind ATP. The polypeptide is DNA replication and repair protein RecF (Chlamydia trachomatis serovar A (strain ATCC VR-571B / DSM 19440 / HAR-13)).